The chain runs to 261 residues: Ribosomal RNA large subunit methyltransferase E (261 aa).

Residues G81, W83, D104, D120, and D144 each coordinate S-adenosyl-L-methionine. K184 functions as the Proton acceptor in the catalytic mechanism. Positions 233-261 are disordered; it reads GNALGHEVEDDGPMPHDPREDATADEDQD. The segment covering 245 to 254 has biased composition (basic and acidic residues); the sequence is PMPHDPREDA.

It belongs to the class I-like SAM-binding methyltransferase superfamily. RNA methyltransferase RlmE family.

The protein localises to the cytoplasm. The enzyme catalyses uridine(2552) in 23S rRNA + S-adenosyl-L-methionine = 2'-O-methyluridine(2552) in 23S rRNA + S-adenosyl-L-homocysteine + H(+). Functionally, specifically methylates the uridine in position 2552 of 23S rRNA at the 2'-O position of the ribose in the fully assembled 50S ribosomal subunit. The sequence is that of Ribosomal RNA large subunit methyltransferase E from Allorhizobium ampelinum (strain ATCC BAA-846 / DSM 112012 / S4) (Agrobacterium vitis (strain S4)).